The chain runs to 125 residues: Small ribosomal subunit protein uS13 (125 aa).

The segment at 97 to 125 is disordered; that stretch reads PLRGQRTKTNARTRKGKRKTVANKKMASK.

It belongs to the universal ribosomal protein uS13 family. Part of the 30S ribosomal subunit. Forms a loose heterodimer with protein S19. Forms two bridges to the 50S subunit in the 70S ribosome.

Its function is as follows. Located at the top of the head of the 30S subunit, it contacts several helices of the 16S rRNA. In the 70S ribosome it contacts the 23S rRNA (bridge B1a) and protein L5 of the 50S subunit (bridge B1b), connecting the 2 subunits; these bridges are implicated in subunit movement. Contacts the tRNAs in the A and P-sites. The chain is Small ribosomal subunit protein uS13 from Borrelia hermsii (strain HS1 / DAH).